Reading from the N-terminus, the 806-residue chain is Protein bimA (806 aa).

2 TPR repeats span residues 76 to 109 (LGCSYVYAQACLDLGKYTDGINALERSKGQWTSR) and 127 to 160 (AAVLCLQGKLWQAHKEHNKAVECYAAALKLNPFM). 3 disordered regions span residues 202-348 (VLPP…HRLG), 353-372 (TVSGQVAHPSVPHSTDQGVG), and 401-460 (REVK…ASSK). Over residues 224–237 (AGTTRSDSTSTHGS) the composition is skewed to polar residues. Over residues 246–257 (GSTVSVASSGTG) the composition is skewed to low complexity. Positions 260–399 (LPREGMETPG…ISSTALGVKE (140 aa)) are bimA domain. Over residues 328 to 348 (TKFESDEGHTERDAGMGHRLG) the composition is skewed to basic and acidic residues. The segment covering 408-421 (TTGNKARTTTSSNV) has biased composition (polar residues). Positions 432–445 (HAGEIHDGDSKEYR) are enriched in basic and acidic residues. A compositionally biased stretch (low complexity) spans 446–459 (GTSSTSNGSQNASS). TPR repeat units follow at residues 513–546 (PWVLAQIGRAYYEQAMYTEAEKYFVRVKAMAPSR), 581–614 (PEAWCAVGNSFSHQRDHDQALKCFKRATQLDPHF), 616–648 (YGFTLQGHEYVANEEYDKALDAYRSGINADSRH), 649–682 (YNAWYGLGTVYDKMGKLDFAEQHFRNAAKINPSN), 684–716 (VLICCIGLVLEKMNNPKSALIQYNRACTLAPHS), and 751–784 (ANVHYLLGKLYKMLRDKGNAIKHFTTALNLDPKA).

This sequence belongs to the APC3/CDC27 family.

It localises to the nucleus. Functionally, required for the completion of mitosis in Aspergillus nidulans. This chain is Protein bimA (bimA), found in Emericella nidulans (strain FGSC A4 / ATCC 38163 / CBS 112.46 / NRRL 194 / M139) (Aspergillus nidulans).